Here is a 501-residue protein sequence, read N- to C-terminus: ATP synthase subunit alpha (501 aa).

Residue 170 to 177 (GDRQTGKS) coordinates ATP.

Belongs to the ATPase alpha/beta chains family. As to quaternary structure, F-type ATPases have 2 components, CF(1) - the catalytic core - and CF(0) - the membrane proton channel. CF(1) has five subunits: alpha(3), beta(3), gamma(1), delta(1), epsilon(1). CF(0) has three main subunits: a(1), b(2) and c(9-12). The alpha and beta chains form an alternating ring which encloses part of the gamma chain. CF(1) is attached to CF(0) by a central stalk formed by the gamma and epsilon chains, while a peripheral stalk is formed by the delta and b chains.

The protein resides in the cell membrane. It catalyses the reaction ATP + H2O + 4 H(+)(in) = ADP + phosphate + 5 H(+)(out). Its function is as follows. Produces ATP from ADP in the presence of a proton gradient across the membrane. The alpha chain is a regulatory subunit. The protein is ATP synthase subunit alpha of Acholeplasma laidlawii (strain PG-8A).